The sequence spans 497 residues: MSLKGGTAAPAPMAPPRKWYDMTSAEFYVYVVAFMCGISIMMPINAVFSAPSYMLEYYLYATKDPFLVPKMTNFWTNVMTYYNLISMVTSLVVEPLTLLKSFRKIPMLVRLLGGLSVLIIEIIVLMVVPARGTTEAGAVATMCIAGFIGGLGTSIFESTVYGMFGAFPPSFTSIMMGGVGISGVLTSLIQIIVKAALPDTYEGVKKQSYIYYSLDVGIQAATFIALIMMRFNSFAQLHFGDLGGVKSKVDAGSLAGAGENVREPGAEATELEQYTEPAIGQIQEKNAEAHKDDPLAERELSEEESGDSRAVEAAGEAPTSNEILRATSVFSVLRSVKWMFVACGFNFLITLFLFPGIATGMFPESKWFATVAVFIFNCCDVLGRFSSAFRITWPRRYNQRWIIVAASFARVIFVPLLLLHSYHYIPSEAYGYVMQVVFGLSSGYIASMALVLGPQSKGIDNDGKRFVAGTLMGISILVGGTIGTVLSIMTQTIRETY.

Over 1–26 the chain is Cytoplasmic; the sequence is MSLKGGTAAPAPMAPPRKWYDMTSAE. Residues 27-47 form a helical membrane-spanning segment; it reads FYVYVVAFMCGISIMMPINAV. Residues 48–77 lie on the Extracellular side of the membrane; the sequence is FSAPSYMLEYYLYATKDPFLVPKMTNFWTN. The helical transmembrane segment at 78–98 threads the bilayer; the sequence is VMTYYNLISMVTSLVVEPLTL. Over 99–107 the chain is Cytoplasmic; sequence LKSFRKIPM. The helical transmembrane segment at 108 to 128 threads the bilayer; it reads LVRLLGGLSVLIIEIIVLMVV. The Extracellular portion of the chain corresponds to 129–135; the sequence is PARGTTE. Residues 136 to 156 traverse the membrane as a helical segment; sequence AGAVATMCIAGFIGGLGTSIF. The Cytoplasmic portion of the chain corresponds to 157-172; that stretch reads ESTVYGMFGAFPPSFT. Residues 173 to 193 traverse the membrane as a helical segment; that stretch reads SIMMGGVGISGVLTSLIQIIV. Residues 194 to 208 lie on the Extracellular side of the membrane; it reads KAALPDTYEGVKKQS. The helical transmembrane segment at 209-229 threads the bilayer; the sequence is YIYYSLDVGIQAATFIALIMM. Residues 230–337 lie on the Cytoplasmic side of the membrane; it reads RFNSFAQLHF…SVFSVLRSVK (108 aa). Residues 286–299 show a composition bias toward basic and acidic residues; it reads NAEAHKDDPLAERE. Residues 286–316 form a disordered region; sequence NAEAHKDDPLAERELSEEESGDSRAVEAAGE. A helical membrane pass occupies residues 338–358; the sequence is WMFVACGFNFLITLFLFPGIA. Residues 359 to 361 are Extracellular-facing; it reads TGM. The helical transmembrane segment at 362 to 382 threads the bilayer; the sequence is FPESKWFATVAVFIFNCCDVL. The Cytoplasmic segment spans residues 383-400; the sequence is GRFSSAFRITWPRRYNQR. Residues 401–421 traverse the membrane as a helical segment; sequence WIIVAASFARVIFVPLLLLHS. Residues 422 to 432 lie on the Extracellular side of the membrane; it reads YHYIPSEAYGY. The chain crosses the membrane as a helical span at residues 433-453; that stretch reads VMQVVFGLSSGYIASMALVLG. Residues 454 to 465 lie on the Cytoplasmic side of the membrane; that stretch reads PQSKGIDNDGKR. The chain crosses the membrane as a helical span at residues 466 to 486; that stretch reads FVAGTLMGISILVGGTIGTVL. Residues 487-497 lie on the Extracellular side of the membrane; it reads SIMTQTIRETY.

Belongs to the SLC29A/ENT transporter (TC 2.A.57) family.

The protein localises to the cell membrane. It catalyses the reaction adenosine(in) = adenosine(out). The enzyme catalyses hypoxanthine(out) = hypoxanthine(in). The catalysed reaction is inosine(in) = inosine(out). It carries out the reaction uridine(out) = uridine(in). It catalyses the reaction cytidine(in) = cytidine(out). Nucleoside transporter with broad substrate specificity. Transports adenosine with high affinity. Can also transport hypoxanthine, inosine, uridine and cytidine. The protein is Nucleoside transporter 1 of Crithidia fasciculata.